Consider the following 615-residue polypeptide: MSHFPKLLSSQIAYDVARTMLDGFDKHYRLFREVSHQAKLKFEAGDWHGLQQIQRDRIAFYNERVRESSVILEDEYDAENIEDEIWQQIKLHYIGLLTNHHQPELAETFFNSVCTRILHRSYFNNDFIFVRPAISTEYIENEESPTRPTFRAYYPGSREGMAACFERIVHNFQLERPFEDLQRDIGYVVRAVGEHFGDLRIAPNFQIHTLSSLFFRNKAAFIIGRILNGDRTFPLAIPILHGPSGKLVLDTVLLKKEQLLILFSFTHSYFMVDMEIPSAYVTFLRDIMPRKPRAEIYTSLGLQKQGKNLFYRDFLHHLQHSSDKFIVAPGIRGLVMLVFTLPSYPYVFKVIRDVFPAPKETTRELVKSKYQLVKQHDRVGRMADTLEYSDVAFPLSRFDEALVREFEQHAPSMIEYQRAKDGGEEIVVRHVYIERRMTPLNIYLQEGSDAQVEHGVIEYGNAIKELIAANIFPGDMLYKNFGVTRHGRVVFYDYDEIEYLTDCNIRHVPQPRNEEEEMSGEVWYTVRPHDIFPETFRTFLLGDPRVGAAFLRHHADFFDPAMWQSHKDRLLAGHVHDFFAYHASDRFIHRYGAAAEPPATPPVKQPDAGPARRVA.

ATP-binding positions include 328–334 and lysine 349; that span reads APGIRGL. Aspartate 384 is an active-site residue. A disordered region spans residues 595–615; it reads AEPPATPPVKQPDAGPARRVA.

It belongs to the AceK family.

The protein localises to the cytoplasm. It carries out the reaction L-seryl-[isocitrate dehydrogenase] + ATP = O-phospho-L-seryl-[isocitrate dehydrogenase] + ADP + H(+). In terms of biological role, bifunctional enzyme which can phosphorylate or dephosphorylate isocitrate dehydrogenase (IDH) on a specific serine residue. This is a regulatory mechanism which enables bacteria to bypass the Krebs cycle via the glyoxylate shunt in response to the source of carbon. When bacteria are grown on glucose, IDH is fully active and unphosphorylated, but when grown on acetate or ethanol, the activity of IDH declines drastically concomitant with its phosphorylation. This is Isocitrate dehydrogenase kinase/phosphatase from Cupriavidus taiwanensis (strain DSM 17343 / BCRC 17206 / CCUG 44338 / CIP 107171 / LMG 19424 / R1) (Ralstonia taiwanensis (strain LMG 19424)).